Here is a 357-residue protein sequence, read N- to C-terminus: Chorismate synthase (357 aa).

The span at 38 to 49 (EKDIQPDLDRRK) shows a compositional bias: basic and acidic residues. The disordered stretch occupies residues 38 to 60 (EKDIQPDLDRRKPGTSRYTTPRR). NADP(+)-binding residues include arginine 48 and arginine 54. FMN-binding positions include 125–127 (RSS), 243–244 (NA), glycine 283, 298–302 (KPTSS), and arginine 324.

It belongs to the chorismate synthase family. As to quaternary structure, homotetramer. Requires FMNH2 as cofactor.

It carries out the reaction 5-O-(1-carboxyvinyl)-3-phosphoshikimate = chorismate + phosphate. It participates in metabolic intermediate biosynthesis; chorismate biosynthesis; chorismate from D-erythrose 4-phosphate and phosphoenolpyruvate: step 7/7. Catalyzes the anti-1,4-elimination of the C-3 phosphate and the C-6 proR hydrogen from 5-enolpyruvylshikimate-3-phosphate (EPSP) to yield chorismate, which is the branch point compound that serves as the starting substrate for the three terminal pathways of aromatic amino acid biosynthesis. This reaction introduces a second double bond into the aromatic ring system. This is Chorismate synthase from Haemophilus influenzae (strain PittGG).